We begin with the raw amino-acid sequence, 225 residues long: 3-dehydroquinate dehydratase (225 aa).

Residues 30–32 (EWR) and Arg-62 contribute to the 3-dehydroquinate site. Catalysis depends on His-118, which acts as the Proton donor/acceptor. The active-site Schiff-base intermediate with substrate is the Lys-143. 3-dehydroquinate-binding residues include Arg-186, Ser-205, and Gln-209.

This sequence belongs to the type-I 3-dehydroquinase family. As to quaternary structure, homodimer.

It carries out the reaction 3-dehydroquinate = 3-dehydroshikimate + H2O. It participates in metabolic intermediate biosynthesis; chorismate biosynthesis; chorismate from D-erythrose 4-phosphate and phosphoenolpyruvate: step 3/7. Its function is as follows. Involved in the third step of the chorismate pathway, which leads to the biosynthesis of aromatic amino acids. Catalyzes the cis-dehydration of 3-dehydroquinate (DHQ) and introduces the first double bond of the aromatic ring to yield 3-dehydroshikimate. The polypeptide is 3-dehydroquinate dehydratase (Streptococcus mutans serotype c (strain ATCC 700610 / UA159)).